Reading from the N-terminus, the 84-residue chain is Acyl carrier protein MbtL (84 aa).

In terms of domain architecture, Carrier spans 6-81; that stretch reads STVSTTLLSI…ELEAAIAAKY (76 aa). The residue at position 41 (Ser41) is an O-(pantetheine 4'-phosphoryl)serine.

Post-translationally, 4'-phosphopantetheine is transferred from CoA to a specific serine of apo-ACP, leading to the activated holo-ACP form.

The protein resides in the cytoplasm. It participates in siderophore biosynthesis; mycobactin biosynthesis. In terms of biological role, acyl carrier protein involved in the formation of acyl-S-ACP intermediates within the mycobactin biosynthesis process. The aliphatic chains carried by ACP are subsequently transferred on to the mycobactin core by MbtK. The protein is Acyl carrier protein MbtL (mbtL) of Mycobacterium bovis (strain ATCC BAA-935 / AF2122/97).